The chain runs to 137 residues: Small ribosomal subunit protein uS11 (137 aa).

The disordered stretch occupies residues 116–137 (EDVTPIPHDGTRRPGGKRGRRV).

This sequence belongs to the universal ribosomal protein uS11 family. In terms of assembly, part of the 30S ribosomal subunit.

Located on the platform of the 30S subunit. This chain is Small ribosomal subunit protein uS11, found in Methanopyrus kandleri (strain AV19 / DSM 6324 / JCM 9639 / NBRC 100938).